A 132-amino-acid polypeptide reads, in one-letter code: Small ribosomal subunit protein uS8c (132 aa).

Belongs to the universal ribosomal protein uS8 family. As to quaternary structure, part of the 30S ribosomal subunit.

It localises to the plastid. Its subcellular location is the chloroplast. Functionally, one of the primary rRNA binding proteins, it binds directly to 16S rRNA central domain where it helps coordinate assembly of the platform of the 30S subunit. The chain is Small ribosomal subunit protein uS8c (rps8) from Nymphaea alba (White water-lily).